Reading from the N-terminus, the 339-residue chain is MTLQVQSAISLKPFNTFGVDVQARLFAEAHSDDDVREALAYSVEHDVSLLVIGGGSNLLLSGDVQSLVLRMASRGIRIVHEDCLESIVEAEAGEPWHPFVQSCLELGLAGLENLSLIPGTVGAAPMQNIGAYGVEIKDVFHSLTALDRETGELREFSLEDCAFGYRDSVFKHQVARWLILRVRFKLSRVANLHLEYGPVRQRLDELGIDKPTPFDVSRAICAIRSEKLPDPAVLGNAGSFFKNPIIPAQLYATIKQQHPGVVGYPQDDGRVKLAAGWLIEQAGWKGYRDGDAGVHKLQSLVLVNYGQASGLQLLNLARRIQSDIVERFGVELEMEPNLY.

An FAD-binding PCMH-type domain is found at Val19 to Val189. Residue Arg166 is part of the active site. Catalysis depends on Ser239, which acts as the Proton donor. The active site involves Glu335.

It belongs to the MurB family. It depends on FAD as a cofactor.

It is found in the cytoplasm. The catalysed reaction is UDP-N-acetyl-alpha-D-muramate + NADP(+) = UDP-N-acetyl-3-O-(1-carboxyvinyl)-alpha-D-glucosamine + NADPH + H(+). It participates in cell wall biogenesis; peptidoglycan biosynthesis. In terms of biological role, cell wall formation. This is UDP-N-acetylenolpyruvoylglucosamine reductase from Pseudomonas savastanoi pv. phaseolicola (strain 1448A / Race 6) (Pseudomonas syringae pv. phaseolicola (strain 1448A / Race 6)).